The primary structure comprises 273 residues: F-actin-capping protein subunit alpha (273 aa).

This sequence belongs to the F-actin-capping protein alpha subunit family. As to quaternary structure, component of the F-actin capping complex, composed of a heterodimer of an alpha and a beta subunit.

The protein resides in the cytoplasm. It localises to the cytoskeleton. It is found in the actin patch. Functionally, F-actin-capping proteins bind in a Ca(2+)-independent manner to the fast growing ends of actin filaments (barbed end) thereby blocking the exchange of subunits at these ends. Unlike other capping proteins (such as gelsolin and severin), these proteins do not sever actin filaments. In Neurospora crassa (strain ATCC 24698 / 74-OR23-1A / CBS 708.71 / DSM 1257 / FGSC 987), this protein is F-actin-capping protein subunit alpha (fac-1).